Consider the following 335-residue polypeptide: Acetyl-coenzyme A carboxylase carboxyl transferase subunit alpha (335 aa).

In terms of domain architecture, CoA carboxyltransferase C-terminal spans 48-308 (VLESKVDALR…KSLLVEELRM (261 aa)).

It belongs to the AccA family. As to quaternary structure, acetyl-CoA carboxylase is a heterohexamer composed of biotin carboxyl carrier protein (AccB), biotin carboxylase (AccC) and two subunits each of ACCase subunit alpha (AccA) and ACCase subunit beta (AccD).

Its subcellular location is the cytoplasm. The catalysed reaction is N(6)-carboxybiotinyl-L-lysyl-[protein] + acetyl-CoA = N(6)-biotinyl-L-lysyl-[protein] + malonyl-CoA. Its pathway is lipid metabolism; malonyl-CoA biosynthesis; malonyl-CoA from acetyl-CoA: step 1/1. Component of the acetyl coenzyme A carboxylase (ACC) complex. First, biotin carboxylase catalyzes the carboxylation of biotin on its carrier protein (BCCP) and then the CO(2) group is transferred by the carboxyltransferase to acetyl-CoA to form malonyl-CoA. The polypeptide is Acetyl-coenzyme A carboxylase carboxyl transferase subunit alpha (Chlorobium phaeobacteroides (strain BS1)).